The following is a 121-amino-acid chain: Large ribosomal subunit protein bL12 (121 aa).

It belongs to the bacterial ribosomal protein bL12 family. Homodimer. Part of the ribosomal stalk of the 50S ribosomal subunit. Forms a multimeric L10(L12)X complex, where L10 forms an elongated spine to which 2 to 4 L12 dimers bind in a sequential fashion. Binds GTP-bound translation factors.

Forms part of the ribosomal stalk which helps the ribosome interact with GTP-bound translation factors. Is thus essential for accurate translation. The chain is Large ribosomal subunit protein bL12 from Lactococcus lactis subsp. cremoris (strain MG1363).